The chain runs to 372 residues: MEYGLDLEYSFNEFFKGFGLSSEIAHIIWLPIPMLLVLVAAVVGVLVTVWLERKISAAAQQRIGPEYAGALGVLQPIADGLKLLVKEDIIPAKADGILFTAGPILVLVPVILSWLIVPFGQNLLISNVGIGIFLWIALSSIQPIGLLMSGYASNNKYSLLGGLRAAAQSISYEIPLALSVLAIVLMTNSLSTIDIVNQQSGAGILSWNIWRQPVGFIVFWICALAECERLPFDLPEAEEELVAGYQTEYAGMKFALFYLGSYINLILSALLVSILYLGGWGFPIPVELIAKFLHLPINAPVIQVFTASIGIVMTVLKAYLLVFIAILLRWTTPRVRIDQLLDLGWKFLLPISLANLLITAGLKLAFPQFFGG.

Transmembrane regions (helical) follow at residues 27 to 47, 97 to 117, 128 to 148, 176 to 196, 204 to 224, 266 to 286, 308 to 328, and 347 to 367; these read IIWL…GVLV, ILFT…WLIV, VGIG…GLLM, LALS…IDIV, ILSW…ICAL, ILSA…PIPV, SIGI…AILL, and FLLP…LAFP.

It belongs to the complex I subunit 1 family. NDH-1 is composed of at least 11 different subunits.

Its subcellular location is the cellular thylakoid membrane. The catalysed reaction is a plastoquinone + NADH + (n+1) H(+)(in) = a plastoquinol + NAD(+) + n H(+)(out). It catalyses the reaction a plastoquinone + NADPH + (n+1) H(+)(in) = a plastoquinol + NADP(+) + n H(+)(out). Its function is as follows. NDH-1 shuttles electrons from an unknown electron donor, via FMN and iron-sulfur (Fe-S) centers, to quinones in the respiratory and/or the photosynthetic chain. The immediate electron acceptor for the enzyme in this species is believed to be plastoquinone. Couples the redox reaction to proton translocation, and thus conserves the redox energy in a proton gradient. This is NAD(P)H-quinone oxidoreductase subunit 1 from Prochlorococcus marinus (strain MIT 9312).